The chain runs to 172 residues: Ribosome maturation factor RimM (172 aa).

Residues 92 to 167 (ENEFYHSDLV…VILKLPEIIG (76 aa)) form the PRC barrel domain.

It belongs to the RimM family. As to quaternary structure, binds ribosomal protein uS19.

It is found in the cytoplasm. An accessory protein needed during the final step in the assembly of 30S ribosomal subunit, possibly for assembly of the head region. Essential for efficient processing of 16S rRNA. May be needed both before and after RbfA during the maturation of 16S rRNA. It has affinity for free ribosomal 30S subunits but not for 70S ribosomes. This chain is Ribosome maturation factor RimM, found in Ehrlichia ruminantium (strain Gardel).